The following is a 254-amino-acid chain: U3 small nucleolar RNA-associated protein NOL7 (254 aa).

The tract at residues 1 to 90 (MVQLRPRLSR…ASARRDKTLL (90 aa)) is disordered. Acidic residues-rich tracts occupy residues 18 to 31 (MVDE…EEEA) and 48 to 61 (PLDE…EAPE). The span at 71 to 90 (EAREEELRVRASARRDKTLL) shows a compositional bias: basic and acidic residues. Residue lysine 127 forms a Glycyl lysine isopeptide (Lys-Gly) (interchain with G-Cter in SUMO2) linkage. Serine 129 carries the post-translational modification Phosphoserine. Residue lysine 157 forms a Glycyl lysine isopeptide (Lys-Gly) (interchain with G-Cter in SUMO2) linkage. The tract at residues 235 to 254 (NAKRFKKRWMAKKMKKKTYK) is disordered.

Belongs to the UTP16 family. In terms of assembly, part of the small subunit (SSU) processome, composed of more than 70 proteins and the RNA chaperone small nucleolar RNA (snoRNA) U3.

The protein resides in the nucleus. Its subcellular location is the nucleolus. Functionally, functions as part of the small subunit (SSU) processome, first precursor of the small eukaryotic ribosomal subunit that coordinates the first two steps of ribosome biogenesis in transcription of the primary transcript pre-RNA and pre-18S processing. During the assembly of the SSU processome in the nucleolus, many ribosome biogenesis factors, an RNA chaperone and ribosomal proteins associate with the nascent pre-rRNA and work in concert to generate RNA folding, modifications, rearrangements and cleavage as well as targeted degradation of pre-ribosomal RNA by the RNA exosome. This subunit is required for processing of the 5'-external transcribed spacer sequence (5'ETS) of the primary transcript pre-rRNA to yield the 18S rRNA. Also plays a role in maintaining early pre-rRNA levels, either by assisting in its transcription or stability. This is U3 small nucleolar RNA-associated protein NOL7 (Nol7) from Mus musculus (Mouse).